A 36-amino-acid polypeptide reads, in one-letter code: MSDINTARLPVFSLPVFFPFVSDDIQAVLTRGESLC.

Residues 1 to 10 (MSDINTARLP) constitute a propeptide that is removed on maturation. Positions 11-19 (VFSLPVFFP) form a cross-link, cyclopeptide (Val-Pro). Positions 20–36 (FVSDDIQAVLTRGESLC) are excised as a propeptide.

This sequence belongs to the MSDIN fungal toxin family. Post-translationally, processed by the macrocyclase-peptidase enzyme POPB to yield a toxic cyclic nonapeptide. POPB first removes 10 residues from the N-terminus. Conformational trapping of the remaining peptide forces the enzyme to release this intermediate rather than proceed to macrocyclization. The enzyme rebinds the remaining peptide in a different conformation and catalyzes macrocyclization of the N-terminal 9 residues. In terms of tissue distribution, expressed in basidiocarps.

Its function is as follows. Cyclic nonapeptide that belongs to the MSDIN-like toxin family responsible for a large number of food poisoning cases and deaths. The polypeptide is Amanexitide proprotein 1 (Amanita exitialis (Guangzhou destroying angel)).